Here is a 315-residue protein sequence, read N- to C-terminus: Homoserine kinase (315 aa).

97–107 serves as a coordination point for ATP; the sequence is PPARGLGSSAT.

The protein belongs to the GHMP kinase family. Homoserine kinase subfamily.

Its subcellular location is the cytoplasm. The catalysed reaction is L-homoserine + ATP = O-phospho-L-homoserine + ADP + H(+). Its pathway is amino-acid biosynthesis; L-threonine biosynthesis; L-threonine from L-aspartate: step 4/5. Its function is as follows. Catalyzes the ATP-dependent phosphorylation of L-homoserine to L-homoserine phosphate. In Synechococcus sp. (strain CC9311), this protein is Homoserine kinase.